The following is a 123-amino-acid chain: Small ribosomal subunit protein uS12 (123 aa).

The tract at residues 1 to 28 (MPTIQQLIRKPRQPKVKRSKSQHLEQCP) is disordered. Basic residues predominate over residues 9 to 21 (RKPRQPKVKRSKS). A 3-methylthioaspartic acid modification is found at Asp-89.

Belongs to the universal ribosomal protein uS12 family. Part of the 30S ribosomal subunit. Contacts proteins S8 and S17. May interact with IF1 in the 30S initiation complex.

With S4 and S5 plays an important role in translational accuracy. Its function is as follows. Interacts with and stabilizes bases of the 16S rRNA that are involved in tRNA selection in the A site and with the mRNA backbone. Located at the interface of the 30S and 50S subunits, it traverses the body of the 30S subunit contacting proteins on the other side and probably holding the rRNA structure together. The combined cluster of proteins S8, S12 and S17 appears to hold together the shoulder and platform of the 30S subunit. The sequence is that of Small ribosomal subunit protein uS12 from Ruegeria pomeroyi (strain ATCC 700808 / DSM 15171 / DSS-3) (Silicibacter pomeroyi).